The chain runs to 213 residues: Outer envelope pore protein 24B, chloroplastic (213 aa).

Residues M1–M3 are Cytoplasmic-facing. The beta stranded transmembrane segment at K4 to T13 threads the bilayer. Topologically, residues D14–G18 are chloroplast intermembrane. A beta stranded membrane pass occupies residues I19–D28. Residues I29–R32 lie on the Cytoplasmic side of the membrane. A beta stranded membrane pass occupies residues A33–A42. The Chloroplast intermembrane segment spans residues G43–K55. Residues P56–N64 form a beta stranded membrane-spanning segment. The Cytoplasmic portion of the chain corresponds to V65–V70. A beta stranded transmembrane segment spans residues R71 to I80. Over A81–R93 the chain is Chloroplast intermembrane. Residues A94–S103 form a beta stranded membrane-spanning segment. Residues L104–S108 lie on the Cytoplasmic side of the membrane. Residues A109–V118 form a beta stranded membrane-spanning segment. Residues G119 to N122 are Chloroplast intermembrane-facing. Residues C123 to G132 form a beta stranded membrane-spanning segment. Residues G133–A144 lie on the Cytoplasmic side of the membrane. Residues K145–F156 traverse the membrane as a beta stranded segment. The Chloroplast intermembrane segment spans residues Y157–G159. A beta stranded transmembrane segment spans residues D160–T168. Residues S169–S170 are Cytoplasmic-facing. The beta stranded transmembrane segment at K171 to R179 threads the bilayer. Topologically, residues N180–P201 are chloroplast intermembrane. A beta stranded membrane pass occupies residues K202–L211. The Cytoplasmic segment spans residues E212–M213.

The protein belongs to the plastid outer envelope porin OEP24 (TC 1.B.28) family. Homooligomers form large rather nonselective pores in plastidial outer membranes.

Its subcellular location is the plastid. The protein resides in the etioplast membrane. It localises to the chloroplast outer membrane. In terms of biological role, high-conductance voltage-dependent solute channel with a slight selectivity for cations transporting triosephosphates, dicarboxylic acids, ATP, inorganic phosphate (Pi), sugars, and positively or negatively charged amino acids. This chain is Outer envelope pore protein 24B, chloroplastic (OEP24B), found in Arabidopsis thaliana (Mouse-ear cress).